A 543-amino-acid polypeptide reads, in one-letter code: Chaperonin GroEL 1 (543 aa).

ATP-binding positions include 30–33 (TLGP), Lys-51, 87–91 (DGTTT), Gly-415, and Asp-496.

The protein belongs to the chaperonin (HSP60) family. In terms of assembly, forms a cylinder of 14 subunits composed of two heptameric rings stacked back-to-back. Interacts with the co-chaperonin GroES.

It is found in the cytoplasm. It catalyses the reaction ATP + H2O + a folded polypeptide = ADP + phosphate + an unfolded polypeptide.. In terms of biological role, together with its co-chaperonin GroES, plays an essential role in assisting protein folding. The GroEL-GroES system forms a nano-cage that allows encapsulation of the non-native substrate proteins and provides a physical environment optimized to promote and accelerate protein folding. This is Chaperonin GroEL 1 from Roseobacter denitrificans (strain ATCC 33942 / OCh 114) (Erythrobacter sp. (strain OCh 114)).